A 387-amino-acid polypeptide reads, in one-letter code: Protein kinase ORF16 (387 aa).

A Protein kinase domain is found at 82 to 381 (KKILSRVGPE…VTLMTELSLL (300 aa)). Lys122 lines the ATP pocket. The Proton acceptor role is filled by Asp226.

The protein belongs to the protein kinase superfamily. Ser/Thr protein kinase family.

It carries out the reaction L-seryl-[protein] + ATP = O-phospho-L-seryl-[protein] + ADP + H(+). The enzyme catalyses L-threonyl-[protein] + ATP = O-phospho-L-threonyl-[protein] + ADP + H(+). The polypeptide is Protein kinase ORF16 (ORF16) (Ictalurid herpesvirus 1 (strain Auburn) (IcHV-1)).